Here is a 177-residue protein sequence, read N- to C-terminus: Large ribosomal subunit protein uL6 (177 aa).

This sequence belongs to the universal ribosomal protein uL6 family. In terms of assembly, part of the 50S ribosomal subunit.

Functionally, this protein binds to the 23S rRNA, and is important in its secondary structure. It is located near the subunit interface in the base of the L7/L12 stalk, and near the tRNA binding site of the peptidyltransferase center. This is Large ribosomal subunit protein uL6 from Dinoroseobacter shibae (strain DSM 16493 / NCIMB 14021 / DFL 12).